The chain runs to 504 residues: UNC93-like protein C922.05c (504 aa).

11 helical membrane passes run 64-84, 97-116, 123-145, 149-169, 186-206, 219-239, 275-293, 310-330, 343-363, 391-411, and 452-472; these read IIVS…SGLG, ANVA…GSIC, LTLA…YKHV, GFVI…WAAQ, IAIF…VPLA, GTYA…LFMV, YWVL…FTTY, LNNL…ALFL, VGWG…LAFQ, FLYI…YWII, and YFAS…PVIW.

It belongs to the unc-93 family.

It is found in the cytoplasm. It localises to the membrane. The sequence is that of UNC93-like protein C922.05c from Schizosaccharomyces pombe (strain 972 / ATCC 24843) (Fission yeast).